The following is a 311-amino-acid chain: Pyrimidine-specific ribonucleoside hydrolase RihA (311 aa).

Histidine 240 is an active-site residue.

It belongs to the IUNH family. RihA subfamily.

Hydrolyzes cytidine or uridine to ribose and cytosine or uracil, respectively. The protein is Pyrimidine-specific ribonucleoside hydrolase RihA of Salmonella typhimurium (strain LT2 / SGSC1412 / ATCC 700720).